A 339-amino-acid chain; its full sequence is DNA-directed RNA polymerase subunit alpha (339 aa).

Positions 1–233 (MVREEVAGST…DLFLPFLHAE (233 aa)) are alpha N-terminal domain (alpha-NTD). The alpha C-terminal domain (alpha-CTD) stretch occupies residues 264–339 (KKGIPLNSIF…IDLLKNKLSF (76 aa)).

This sequence belongs to the RNA polymerase alpha chain family. As to quaternary structure, in plastids the minimal PEP RNA polymerase catalytic core is composed of four subunits: alpha, beta, beta', and beta''. When a (nuclear-encoded) sigma factor is associated with the core the holoenzyme is formed, which can initiate transcription.

It localises to the plastid. The protein localises to the chloroplast. It carries out the reaction RNA(n) + a ribonucleoside 5'-triphosphate = RNA(n+1) + diphosphate. Its function is as follows. DNA-dependent RNA polymerase catalyzes the transcription of DNA into RNA using the four ribonucleoside triphosphates as substrates. In Aegilops tauschii (Tausch's goatgrass), this protein is DNA-directed RNA polymerase subunit alpha.